Consider the following 288-residue polypeptide: Proteasome subunit beta (288 aa).

Positions 1–57 (MTAGDPMRLHPGHALSSFTEHLRALAPELLGPNRFAALDGATGSSGGTGAKDIAPHG) are cleaved as a propeptide — removed in mature form; by autocatalysis. The active-site Nucleophile is the T58.

It belongs to the peptidase T1B family. The 20S proteasome core is composed of 14 alpha and 14 beta subunits that assemble into four stacked heptameric rings, resulting in a barrel-shaped structure. The two inner rings, each composed of seven catalytic beta subunits, are sandwiched by two outer rings, each composed of seven alpha subunits. The catalytic chamber with the active sites is on the inside of the barrel. Has a gated structure, the ends of the cylinder being occluded by the N-termini of the alpha-subunits. Is capped by the proteasome-associated ATPase, ARC.

The protein localises to the cytoplasm. The enzyme catalyses Cleavage of peptide bonds with very broad specificity.. The protein operates within protein degradation; proteasomal Pup-dependent pathway. Its activity is regulated as follows. The formation of the proteasomal ATPase ARC-20S proteasome complex, likely via the docking of the C-termini of ARC into the intersubunit pockets in the alpha-rings, may trigger opening of the gate for substrate entry. Interconversion between the open-gate and close-gate conformations leads to a dynamic regulation of the 20S proteasome proteolysis activity. Component of the proteasome core, a large protease complex with broad specificity involved in protein degradation. This is Proteasome subunit beta from Nocardia farcinica (strain IFM 10152).